A 235-amino-acid chain; its full sequence is Cytochrome c-554 (235 aa).

Positions 1-24 (MKIMIACGLVAAALFTLTSGQSLA) are cleaved as a signal peptide. Heme contacts are provided by C35, C38, H39, H51, C84, C87, H88, C112, C115, H116, H126, C158, C161, H162, and H203. The tract at residues 121 to 144 (NFRGDHRKSGQAFEKSGKKTPRKD) is disordered.

Binds 4 heme groups per subunit.

The protein resides in the periplasm. In terms of biological role, involved in ammonia oxidation; accepts electrons directly from hydroxylamine oxidoreductase (HAO). The polypeptide is Cytochrome c-554 (cycA1) (Nitrosomonas europaea (strain ATCC 19718 / CIP 103999 / KCTC 2705 / NBRC 14298)).